Here is a 319-residue protein sequence, read N- to C-terminus: tRNA-modifying protein YgfZ (319 aa).

2 residues coordinate folate: Trp-27 and Trp-189.

The protein belongs to the tRNA-modifying YgfZ family.

It is found in the cytoplasm. In terms of biological role, folate-binding protein involved in regulating the level of ATP-DnaA and in the modification of some tRNAs. It is probably a key factor in regulatory networks that act via tRNA modification, such as initiation of chromosomal replication. The protein is tRNA-modifying protein YgfZ of Buchnera aphidicola subsp. Acyrthosiphon pisum (strain APS) (Acyrthosiphon pisum symbiotic bacterium).